A 449-amino-acid polypeptide reads, in one-letter code: Heterogeneous nuclear ribonucleoprotein H2 (449 aa).

The residue at position 1 (methionine 1) is an N-acetylmethionine. Methionine 2 bears the N-acetylmethionine; in Heterogeneous nuclear ribonucleoprotein H2, N-terminally processed mark. In terms of domain architecture, RRM 1 spans 11-90 (FVVKVRGLPW…RYVEVFKSNS (80 aa)). A Phosphoserine modification is found at serine 23. A Glycyl lysine isopeptide (Lys-Gly) (interchain with G-Cter in SUMO2) cross-link involves residue lysine 35. Phosphoserine occurs at positions 54 and 63. Residue lysine 87 forms a Glycyl lysine isopeptide (Lys-Gly) (interchain with G-Cter in SUMO2) linkage. Position 90 is a phosphoserine (serine 90). Lysine 98 is covalently cross-linked (Glycyl lysine isopeptide (Lys-Gly) (interchain with G-Cter in SUMO2)). Residues 111–188 (GFVRLRGLPF…RYIEIFKSSR (78 aa)) enclose the RRM 2 domain. Arginine 233 carries the dimethylated arginine; alternate modification. Omega-N-methylarginine; alternate is present on arginine 233. One copy of the 1-1 repeat lies at 234-249 (GAYGGGYGGYDDYGGY). The segment at 234–433 (GAYGGGYGGY…YGGQSSMSGY (200 aa)) is 2 X 16 AA Gly-rich approximate repeats. Tyrosine 246 bears the Phosphotyrosine mark. Residues 289–364 (HCVHMRGLPY…RYVELFLNST (76 aa)) enclose the RRM 3 domain. At serine 310 the chain carries Phosphoserine. Tandem repeats lie at residues 354 to 372 (HRYVELFLNSTAGTSGGAY), 374 to 392 (HSYVELFLNSTAGASGGAY), and 418 to 433 (GGYGGGYGGQSSMSGY). The interval 354 to 392 (HRYVELFLNSTAGTSGGAYDHSYVELFLNSTAGASGGAY) is 2 X 19 AA perfect repeats.

In terms of assembly, component of a ribonucleoprotein complex containing mRNAs and RNA-binding proteins including DDX5, HNRNPH2 and SRSF1 as well as splicing regulator ARVCF. Interacts with TXNL4/DIM1.

The protein resides in the nucleus. It is found in the nucleoplasm. Its function is as follows. This protein is a component of the heterogeneous nuclear ribonucleoprotein (hnRNP) complexes which provide the substrate for the processing events that pre-mRNAs undergo before becoming functional, translatable mRNAs in the cytoplasm. Binds poly(RG). The chain is Heterogeneous nuclear ribonucleoprotein H2 (Hnrnph2) from Mus musculus (Mouse).